Reading from the N-terminus, the 253-residue chain is Regulatory protein VirG (253 aa).

Residues 15-129 (HVLVIDDDVA…EFLARIRVAL (115 aa)) form the Response regulatory domain. A 4-aspartylphosphate modification is found at aspartate 64. A DNA-binding region (ompR/PhoB-type) is located at residues 141–241 (RRSFSFADWT…ARGAGYFFDA (101 aa)).

Post-translationally, phosphorylated by wide host range (WHR) VirA protein.

The protein resides in the cytoplasm. In terms of biological role, virG is required for the positive regulation of at least two vir loci encoded by the Ti plasmid of A.tumefaciens. In Agrobacterium fabrum (strain C58 / ATCC 33970) (Agrobacterium tumefaciens (strain C58)), this protein is Regulatory protein VirG (virG).